The primary structure comprises 455 residues: Single-stranded DNA-binding protein homolog sam-10 (455 aa).

The 33-residue stretch at 19–51 (ARDRLTSYIYEYLQQTGASKTAETFKEEVLSTN) folds into the LisH domain. 4 disordered regions span residues 217–249 (PPPG…LNSP), 281–302 (SDHQ…TAGG), 314–343 (GPGS…HQPK), and 357–442 (EALT…NGEI). Composition is skewed to low complexity over residues 288-298 (AGPAAAAPGAT) and 321-336 (VATT…SSIG). Residues 396-406 (HSVNNNVNPGT) are compositionally biased toward polar residues. Low complexity predominate over residues 407–421 (PGSNPLSNPMSNPPL).

Ubiquitously expressed with higher expression in the head and tail ganglia, the vulva and PLM neurons.

Its subcellular location is the cytoplasm. The protein localises to the nucleus. In terms of biological role, involved cell autonomously in PLM neuron pre-synaptic differentiation by negatively regulating prk-2 expression and in neurite branch positioning. The sequence is that of Single-stranded DNA-binding protein homolog sam-10 from Caenorhabditis elegans.